Here is a 565-residue protein sequence, read N- to C-terminus: Sulfite reductase [NADPH] hemoprotein beta-component (565 aa).

Positions 429, 435, 474, and 478 each coordinate [4Fe-4S] cluster. Cysteine 478 is a binding site for siroheme.

The protein belongs to the nitrite and sulfite reductase 4Fe-4S domain family. Alpha(8)-beta(8). The alpha component is a flavoprotein, the beta component is a hemoprotein. Siroheme serves as cofactor. The cofactor is [4Fe-4S] cluster.

It catalyses the reaction hydrogen sulfide + 3 NADP(+) + 3 H2O = sulfite + 3 NADPH + 4 H(+). Its pathway is sulfur metabolism; hydrogen sulfide biosynthesis; hydrogen sulfide from sulfite (NADPH route): step 1/1. Its function is as follows. Component of the sulfite reductase complex that catalyzes the 6-electron reduction of sulfite to sulfide. This is one of several activities required for the biosynthesis of L-cysteine from sulfate. The chain is Sulfite reductase [NADPH] hemoprotein beta-component from Shewanella sp. (strain MR-4).